The chain runs to 95 residues: Aspartyl/glutamyl-tRNA(Asn/Gln) amidotransferase subunit C (95 aa).

Belongs to the GatC family. In terms of assembly, heterotrimer of A, B and C subunits.

The enzyme catalyses L-glutamyl-tRNA(Gln) + L-glutamine + ATP + H2O = L-glutaminyl-tRNA(Gln) + L-glutamate + ADP + phosphate + H(+). It catalyses the reaction L-aspartyl-tRNA(Asn) + L-glutamine + ATP + H2O = L-asparaginyl-tRNA(Asn) + L-glutamate + ADP + phosphate + 2 H(+). Functionally, allows the formation of correctly charged Asn-tRNA(Asn) or Gln-tRNA(Gln) through the transamidation of misacylated Asp-tRNA(Asn) or Glu-tRNA(Gln) in organisms which lack either or both of asparaginyl-tRNA or glutaminyl-tRNA synthetases. The reaction takes place in the presence of glutamine and ATP through an activated phospho-Asp-tRNA(Asn) or phospho-Glu-tRNA(Gln). This is Aspartyl/glutamyl-tRNA(Asn/Gln) amidotransferase subunit C from Chlorobium phaeobacteroides (strain BS1).